The sequence spans 787 residues: MKKSFPTLLATLVWSALYSQHALADLAEQCMLGVPTYNRPLVTGDPNQLPVNIQADKTEANYPDNAKFIGNVNIQQGNSIMTAEQVELSQLDPATQGSTPTRTITATGKVHYDDNQVILKGPKAWANLNTKDTDVYEGDYQMVGRQGRGSADKMKMRDSNRYTILENGSFTSCLPGDNSWSVVGSEVIQDREEQVAEIWNARFKIGGVPVFYSPYLQLPIGDKRRSGFLIPNAKYGSSNGFELLTPYYWNIAPNFDATITPHLQTKRGMQWQNEFRYLTTPGLGVIQFDWLPSDSEYAKTSQQDNNDTRWLLHWGHSGVMDQVWRFDADYTKVSDDRYFTDLDSHYGSTTDGYVTQKLSTGYANQNWNTTLSTRQFQVFSNATSRDVYRAEPQLDINYYQNDIGPVDMHLYGQAVKFTNVNDNRPEATRLHVEPTLNLPLANRWASLNTEAKLLATHYQQDNLDRYRADPTVSDVNKNALQSSVNRVMPQYKVDGKMVFEREMDWSQAYTQTLEPRAQYLYVPYRDQSSIHTYDSTLMQTDYSGLFRDRSYSGLDRIASANQIATGVTTRIYDDALVERFNASIGQIYYFDRPRTGDRNTSLDKSDNNGSQVWAGDSFLKIDDSWGVRGGLQYDNRLNEVALGDAVLEYRRDAERLVQLNYRYASPEYIRDMLPNVTNQGSQQGISQVGVTASWPIVERWAVVGAYYYDTKANQPANQLIGLQYNTCCWAVSVGYERKITDWNSASRSSEYDNKVSFNIELRGLSSNYGLGSDKMLRSGILPYQRAF.

Positions Met-1–Ala-24 are cleaved as a signal peptide.

This sequence belongs to the LptD family. In terms of assembly, component of the lipopolysaccharide transport and assembly complex. Interacts with LptE and LptA.

It is found in the cell outer membrane. Functionally, together with LptE, is involved in the assembly of lipopolysaccharide (LPS) at the surface of the outer membrane. This chain is LPS-assembly protein LptD, found in Pectobacterium atrosepticum (strain SCRI 1043 / ATCC BAA-672) (Erwinia carotovora subsp. atroseptica).